The primary structure comprises 89 residues: Small ribosomal subunit protein uS15 (89 aa).

The protein belongs to the universal ribosomal protein uS15 family. As to quaternary structure, part of the 30S ribosomal subunit. Forms a bridge to the 50S subunit in the 70S ribosome, contacting the 23S rRNA.

Its function is as follows. One of the primary rRNA binding proteins, it binds directly to 16S rRNA where it helps nucleate assembly of the platform of the 30S subunit by binding and bridging several RNA helices of the 16S rRNA. Functionally, forms an intersubunit bridge (bridge B4) with the 23S rRNA of the 50S subunit in the ribosome. The sequence is that of Small ribosomal subunit protein uS15 from Syntrophobacter fumaroxidans (strain DSM 10017 / MPOB).